Here is a 682-residue protein sequence, read N- to C-terminus: Potassium-transporting ATPase ATP-binding subunit (682 aa).

The next 4 helical transmembrane spans lie at 35–55 (VMFIVWVGSLLTTLLAIAMAG), 62–82 (ATFTAAVSIWLWFTVLFANFA), 219–239 (IALTILLIALTLVFLLATATI), and 254–274 (VLVALLVCLIPTTIGGLLSAI). D307 functions as the 4-aspartylphosphate intermediate in the catalytic mechanism. Residues D344, E348, 377–384 (FTAQTRMS), and K395 each bind ATP. D518 and D522 together coordinate Mg(2+). Transmembrane regions (helical) follow at residues 588–608 (FAIIPAAFAAVYPQLAMLNVM), 616–636 (AILSAVIFNALIIVFLIPLAL), and 656–676 (IYGLGGLLVPFIGIKAIDLLL).

This sequence belongs to the cation transport ATPase (P-type) (TC 3.A.3) family. Type IA subfamily. The system is composed of three essential subunits: KdpA, KdpB and KdpC.

The protein resides in the cell inner membrane. It catalyses the reaction K(+)(out) + ATP + H2O = K(+)(in) + ADP + phosphate + H(+). In terms of biological role, part of the high-affinity ATP-driven potassium transport (or Kdp) system, which catalyzes the hydrolysis of ATP coupled with the electrogenic transport of potassium into the cytoplasm. This subunit is responsible for energy coupling to the transport system and for the release of the potassium ions to the cytoplasm. The polypeptide is Potassium-transporting ATPase ATP-binding subunit (Klebsiella pneumoniae (strain 342)).